The following is a 461-amino-acid chain: Serine carboxypeptidase-like 45 (461 aa).

The first 24 residues, 1–24 (MSPLQWLTISFALIIFHSLTVSSS), serve as a signal peptide directing secretion. Disulfide bonds link Cys-86–Cys-340, Cys-243–Cys-261, and Cys-286–Cys-309. Asn-168 is a glycosylation site (N-linked (GlcNAc...) asparagine). Ser-177 is a catalytic residue. Residue Asn-244 is glycosylated (N-linked (GlcNAc...) asparagine). Residues Asp-377 and His-434 contribute to the active site.

This sequence belongs to the peptidase S10 family. Ubiquitous.

It localises to the secreted. Its function is as follows. Probable carboxypeptidase. The polypeptide is Serine carboxypeptidase-like 45 (SCPL45) (Arabidopsis thaliana (Mouse-ear cress)).